The primary structure comprises 320 residues: o-succinylbenzoate synthase (320 aa).

Lysine 133 acts as the Proton donor in catalysis. Positions 161, 190, and 213 each coordinate Mg(2+). Catalysis depends on lysine 235, which acts as the Proton acceptor.

The protein belongs to the mandelate racemase/muconate lactonizing enzyme family. MenC type 1 subfamily. A divalent metal cation is required as a cofactor.

The catalysed reaction is (1R,6R)-6-hydroxy-2-succinyl-cyclohexa-2,4-diene-1-carboxylate = 2-succinylbenzoate + H2O. It participates in quinol/quinone metabolism; 1,4-dihydroxy-2-naphthoate biosynthesis; 1,4-dihydroxy-2-naphthoate from chorismate: step 4/7. It functions in the pathway quinol/quinone metabolism; menaquinone biosynthesis. Functionally, converts 2-succinyl-6-hydroxy-2,4-cyclohexadiene-1-carboxylate (SHCHC) to 2-succinylbenzoate (OSB). The polypeptide is o-succinylbenzoate synthase (Salmonella typhi).